The primary structure comprises 972 residues: Aminopeptidase Ey (972 aa).

The Cytoplasmic segment spans residues 2 to 10 (AAGFFISKS). A helical; Signal-anchor for type II membrane protein membrane pass occupies residues 11–31 (VGIVGIVLALGAVATIIALSV). Topologically, residues 32-972 (VYAQEKNKSS…AWFRAETASS (941 aa)) are extracellular. The tract at residues 33–72 (YAQEKNKSSGGSGGSDTTSTTTASTTTTSTTTASTTAAPN) is cytosolic Ser/Thr-rich junction. Positions 37–77 (KNKSSGGSGGSDTTSTTTASTTTTSTTTASTTAAPNNPWNR) are disordered. N-linked (GlcNAc...) asparagine glycosylation occurs at asparagine 38. Over residues 47 to 70 (SDTTSTTTASTTTTSTTTASTTAA) the composition is skewed to low complexity. A metalloprotease region spans residues 73–967 (NPWNRWRLPT…KEVVHAWFRA (895 aa)). N-linked (GlcNAc...) asparagine glycans are attached at residues asparagine 110, asparagine 132, asparagine 147, asparagine 206, asparagine 269, and asparagine 296. Position 355–359 (355–359 (GAMEN)) interacts with substrate. Residue histidine 391 coordinates Zn(2+). The active-site Proton acceptor is glutamate 392. The Zn(2+) site is built by histidine 395 and glutamate 414. Asparagine 513, asparagine 574, asparagine 584, asparagine 628, asparagine 684, and asparagine 742 each carry an N-linked (GlcNAc...) asparagine glycan. Cysteine 764 and cysteine 771 are joined by a disulfide. A glycan (N-linked (GlcNAc...) asparagine) is linked at asparagine 785. A disulfide bond links cysteine 801 and cysteine 837.

It belongs to the peptidase M1 family. Homodimer. Requires Zn(2+) as cofactor. As to expression, detected in the plasma and granule fractions of egg yolk (at protein level).

Its subcellular location is the cell membrane. The enzyme catalyses Differs from other aminopeptidases in broad specificity for amino acids in the P1 position and the ability to hydrolyze peptides of four or five residues that contain Pro in the P1' position.. Functionally, broad specificity aminopeptidase. Degrades a variety of peptides possessing various N-terminal amino acids including hydrophobic, basic and acidic amino acids. Preferentially hydrolyzes small peptides consisting of 4 or 5 amino acids. Hydrolyzes the N-terminal Xaa-Pro bonds in the chicken brain peptide Leu-Pro-Leu-Arg-PheNH2, the substance P fragment Arg-Pro-Lys-Pro and the bradykinin fragment Arg-Pro-Pro-Gly-Phe. Hydrolyzes the N-formylated peptides fMet-Leu-Phe, fMet-Ala-Gly-Ser-Glu and fMet-Nle-Leu-Phe-Nle-Tyr-Lys, but does not hydrolyze peptides with acetylation or pyroglutamic acid at N-terminus. Does not hydrolyze large peptides such as complete substance P, bradykinin or schistoFLRFamide. In Gallus gallus (Chicken), this protein is Aminopeptidase Ey (ANPEP).